The following is a 122-amino-acid chain: Ribonuclease P protein component (122 aa).

This sequence belongs to the RnpA family. As to quaternary structure, consists of a catalytic RNA component (M1 or rnpB) and a protein subunit.

It carries out the reaction Endonucleolytic cleavage of RNA, removing 5'-extranucleotides from tRNA precursor.. Functionally, RNaseP catalyzes the removal of the 5'-leader sequence from pre-tRNA to produce the mature 5'-terminus. It can also cleave other RNA substrates such as 4.5S RNA. The protein component plays an auxiliary but essential role in vivo by binding to the 5'-leader sequence and broadening the substrate specificity of the ribozyme. This Synechococcus elongatus (strain ATCC 33912 / PCC 7942 / FACHB-805) (Anacystis nidulans R2) protein is Ribonuclease P protein component.